The sequence spans 979 residues: Collagen alpha-2(I) chain (979 aa).

The disordered stretch occupies residues 1–979 (SGGFDFSFLP…FGYEGDFYRA (979 aa)). 4-hydroxyproline occurs at positions 10, 13, 35, and 41. Low complexity predominate over residues 28–41 (LMGPRGPPGASGAP). Lys-88 is subject to 5-hydroxylysine; alternate. A glycan (O-linked (Gal...) hydroxylysine; alternate) is linked at Lys-88. The span at 128–157 (VGAPGPAGARGSDGSVGPVGPAGPIGSAGP) shows a compositional bias: low complexity. Positions 256 to 265 (GESGGKGEPG) are enriched in gly residues. Over residues 266–276 (SAGPQGPPGSS) the composition is skewed to low complexity. A compositionally biased stretch (gly residues) spans 298–307 (GLRGGPGSRG). 4-hydroxyproline is present on residues Pro-341 and Pro-344. Gly residues predominate over residues 434–443 (GVQGGKGEQG). 2 stretches are compositionally biased toward low complexity: residues 490–507 (PGESGAVGPSGAIGSRGP) and 519–529 (EPGVVGAPGTA). Positions 530-548 (GPAGSGGPGERGAAGIPGG) are enriched in gly residues. Composition is skewed to low complexity over residues 570–599 (RGAPGAVGAPGPAGEAGAAGPAGPAGPRGS) and 606–626 (VGPAGPNGFAGPAGAAGQPGA). Basic and acidic residues predominate over residues 627-636 (KGERGTKGPK). The span at 644–654 (PTGPVGSAGPA) shows a compositional bias: low complexity. A compositionally biased stretch (gly residues) spans 664-673 (GSRGDGGPPG). Residues 675–684 (TGFPGAAGRT) are compositionally biased toward low complexity. Residues 721-730 (GETGAGGPPG) show a composition bias toward gly residues. Composition is skewed to low complexity over residues 738-765 (SGEPGTAGPPGTAGPQGLLGAPGILGLP) and 773-783 (LPGVAGAVGEP). Residues 784–802 (GPLGIGPPGARGPSGGDGL) show a composition bias toward gly residues. Low complexity-rich tracts occupy residues 811–833 (YAGNAGPVGAAGAPGPHGSVGPA) and 841–856 (EPGPVGSVGPVGALGP). Residues 866–877 (RGDKGEPGDKGP) show a composition bias toward basic and acidic residues. Residues 951–961 (GPGPPGPPGPP) are compositionally biased toward pro residues.

The protein belongs to the fibrillar collagen family. Trimers of one alpha 2(I) and two alpha 1(I) chains. Interacts (via C-terminus) with TMEM131 (via PapD-L domain); the interaction is direct and is involved in assembly and TRAPPIII ER-to-Golgi transport complex-dependent secretion of collagen. In terms of processing, prolines at the third position of the tripeptide repeating unit (G-X-Y) are hydroxylated in some or all of the chains. As to expression, expressed in bones.

It is found in the secreted. It localises to the extracellular space. The protein localises to the extracellular matrix. Type I collagen is a member of group I collagen (fibrillar forming collagen). In Neocnus dousman (Slow ground sloth), this protein is Collagen alpha-2(I) chain.